The primary structure comprises 419 residues: Phospho-N-acetylmuramoyl-pentapeptide-transferase (419 aa).

The next 10 membrane-spanning stretches (helical) occupy residues 22-42, 72-92, 99-119, 135-155, 208-228, 238-258, 278-298, 303-323, 328-348, and 396-416; these read YVSFRSAVAIILALLLATVIG, TPTMGGLIIIISILIPTLLLA, ILLMIVTTLLLGSLGFLDDYI, IIGQVGLGFIIGIVLYMNPAV, VLFGWILFVCVAVVVVTFISN, GLATGSSAIIGVVLAIFAYVS, LTIFAFAFVGATIGFLWYNAY, FMGDTGSLTLGGIIAVFALII, LLPILCFVFIIEGLSVMIQVF, and KITVRFWLVGIIMAAITIATL.

This sequence belongs to the glycosyltransferase 4 family. MraY subfamily. Mg(2+) serves as cofactor.

The protein resides in the cell inner membrane. It carries out the reaction UDP-N-acetyl-alpha-D-muramoyl-L-alanyl-gamma-D-glutamyl-meso-2,6-diaminopimeloyl-D-alanyl-D-alanine + di-trans,octa-cis-undecaprenyl phosphate = di-trans,octa-cis-undecaprenyl diphospho-N-acetyl-alpha-D-muramoyl-L-alanyl-D-glutamyl-meso-2,6-diaminopimeloyl-D-alanyl-D-alanine + UMP. Its pathway is cell wall biogenesis; peptidoglycan biosynthesis. In terms of biological role, catalyzes the initial step of the lipid cycle reactions in the biosynthesis of the cell wall peptidoglycan: transfers peptidoglycan precursor phospho-MurNAc-pentapeptide from UDP-MurNAc-pentapeptide onto the lipid carrier undecaprenyl phosphate, yielding undecaprenyl-pyrophosphoryl-MurNAc-pentapeptide, known as lipid I. This Porphyromonas gingivalis (strain ATCC 33277 / DSM 20709 / CIP 103683 / JCM 12257 / NCTC 11834 / 2561) protein is Phospho-N-acetylmuramoyl-pentapeptide-transferase.